We begin with the raw amino-acid sequence, 51 residues long: uncharacterized protein (51 aa).

Positions methionine 1–serine 24 are disordered.

This is an uncharacterized protein from Escherichia coli.